The primary structure comprises 259 residues: DnaJ homolog subfamily C member 9 (259 aa).

Residues 15 to 82 enclose the J domain; it reads DLYQVLGVRR…EQKAVYDEQG (68 aa). Position 109 is a phosphoserine (Ser109). Residues 171 to 248 are required for histone binding; the sequence is EIPAYSAFVK…EAKYCKPSKG (78 aa).

Forms a co-chaperone complex with MCM2 and histone H3.3-H4 dimers. Within the complex, interacts (via C-terminus) with MCM2 (via N-terminus); the interaction is histone-dependent. Within the complex, interacts (via C-terminus) with histone H3.3-H4 heterodimers; the interaction is direct. Interacts with histones H4, H3.3, H3.2 and H3.1, but not with CENPA or the testis-specific histone H3.1t. Interacts (via J domain) with HSPA1A, HSPA1B and HSPA8. May interact with TONSL; the interaction seems to be histone-dependent. May interact with HSPA8 and BAG2; the interactions seem to be histone-dependent.

The protein resides in the nucleus. It localises to the cytoplasm. Its subcellular location is the cell membrane. Functionally, acts as a dual histone chaperone and heat shock co-chaperone. As a histone chaperone, forms a co-chaperone complex with MCM2 and histone H3-H4 heterodimers; and may thereby assist MCM2 in histone H3-H4 heterodimer recognition and facilitate the assembly of histones into nucleosomes. May also act as a histone co-chaperone together with TONSL. May recruit histone chaperones ASF1A, NASP and SPT2 to histone H3-H4 heterodimers. Also plays a role as co-chaperone of the HSP70 family of molecular chaperone proteins, such as HSPA1A, HSPA1B and HSPA8. As a co-chaperone, may play a role in the recruitment of HSP70-type molecular chaperone machinery to histone H3-H4 substrates, thereby maintaining the histone structural integrity. Exhibits activity to assemble histones onto DNA in vitro. The chain is DnaJ homolog subfamily C member 9 (Dnajc9) from Mus musculus (Mouse).